The primary structure comprises 496 residues: Iroquois-class homeodomain protein irx-4 (496 aa).

A DNA-binding region (homeobox; TALE-type) is located at residues 141–203 (GSTRRKNATR…NARRRLKKEN (63 aa)). Residues 203 to 236 (NKMTWPPRNKCSDEKRPYDEEEEEEEEEDSQKAT) form a disordered region. Positions 221–231 (DEEEEEEEEED) are enriched in acidic residues.

Belongs to the TALE/IRO homeobox family. In terms of tissue distribution, expressed in the neural plate in overlapping patterns with other irx members, which all share an anterior border of expression. Broadly expressed in the tailbud rhombencephalon (hindbrain). Outside the nervous system and at tailbud stages, expressed in the developing otic vesicle, branchial arches and prospective heart region.

The protein localises to the nucleus. In terms of biological role, acts partially redundantly with other irx members in neural patterning. Required for formation of the posterior forebrain, midbrain, hindbrain, and to a lesser extent, spinal cord. Patterns the neuroectoderm in both the anterior/posterior and dorsal/ventral axes. Does not appear to play a role in pronephros kidney development. This chain is Iroquois-class homeodomain protein irx-4, found in Xenopus tropicalis (Western clawed frog).